A 154-amino-acid chain; its full sequence is Large ribosomal subunit protein uL13 (154 aa).

It belongs to the universal ribosomal protein uL13 family. In terms of assembly, part of the 50S ribosomal subunit.

This protein is one of the early assembly proteins of the 50S ribosomal subunit, although it is not seen to bind rRNA by itself. It is important during the early stages of 50S assembly. This chain is Large ribosomal subunit protein uL13, found in Cereibacter sphaeroides (strain ATCC 17029 / ATH 2.4.9) (Rhodobacter sphaeroides).